The following is a 342-amino-acid chain: MKIAIRGGHNFLAKGACGLIDETIEDRKVYKAVIKNLIENNFEVLDVTPGDCDINTDLKLGVDKANNFNADLFISIHFDKCYDKFDGPLGTGTWVCEKGGKAEIYAQNIVDTISEGTSLKNRGVKTNAKLYELNKTIMPAVIVEVCFCESKVDVDIYREKGSDLIGYLIAKGICKSVNKEISSDLPQVNLENTTNSQNNNLFKTNATAKVALDPRDNPSNNYKDLGEIYENERIKILAEVCDLKFFLPATYWQDSLNKESSPIWVNSKQTVLNVDTNATVINVLTELDARYTPSPDSNRMGYVKNQERLFVHKIENNYALATYLASEGYKTAWFTAEYIKLD.

The region spanning 3 to 173 (IAIRGGHNFL…LIGYLIAKGI (171 aa)) is the MurNAc-LAA domain.

This sequence to C.perfringens CPE1502.

This is an uncharacterized protein from Clostridium perfringens.